The following is a 280-amino-acid chain: Protein MGF 505-3R (280 aa).

It belongs to the asfivirus MGF 505 family.

Its function is as follows. Plays a role in virus cell tropism, and may be required for efficient virus replication in macrophages. This is Protein MGF 505-3R from African swine fever virus (isolate Warthog/Namibia/Wart80/1980) (ASFV).